The primary structure comprises 226 residues: UPF0173 metal-dependent hydrolase Minf_0129 (226 aa).

This sequence belongs to the UPF0173 family.

The protein is UPF0173 metal-dependent hydrolase Minf_0129 of Methylacidiphilum infernorum (isolate V4) (Methylokorus infernorum (strain V4)).